The chain runs to 734 residues: Diacylglycerol kinase alpha (734 aa).

2 consecutive EF-hand domains span residues 109-144 (RPED…MMRM) and 154-189 (ELRP…TVPL). Positions 122, 124, 126, 133, 167, 169, 171, 173, and 178 each coordinate Ca(2+). 2 Phorbol-ester/DAG-type zinc fingers span residues 204–252 (QHMW…ALPC) and 268–318 (THVW…GHEC). Positions 358–505 (NLSTSEALRI…MDRWSVEVIP (148 aa)) are necessary and sufficient for the diacylglycerol kinase activity. The region spanning 371–505 (SNTHPLLVFV…MDRWSVEVIP (135 aa)) is the DAGKc domain. Lys483 is subject to N6-acetyllysine.

The protein belongs to the eukaryotic diacylglycerol kinase family. As to quaternary structure, monomer.

The protein localises to the cytoplasm. The protein resides in the cytosol. The catalysed reaction is a 1,2-diacyl-sn-glycerol + ATP = a 1,2-diacyl-sn-glycero-3-phosphate + ADP + H(+). It carries out the reaction a 1-O-alkyl-sn-glycerol + ATP = a 1-O-alkyl-sn-glycero-3-phosphate + ADP + H(+). The enzyme catalyses 1-O-alkyl-2-acyl-sn-glycerol + ATP = 1-O-alkyl-2-acyl-sn-glycero-3-phosphate + ADP + H(+). It catalyses the reaction 1,2-dihexadecanoyl-sn-glycerol + ATP = 1,2-dihexadecanoyl-sn-glycero-3-phosphate + ADP + H(+). The catalysed reaction is 1-hexadecanoyl-2-(9Z-octadecenoyl)-sn-glycerol + ATP = 1-hexadecanoyl-2-(9Z-octadecenoyl)-sn-glycero-3-phosphate + ADP + H(+). It carries out the reaction 2-(9Z-octadecenoyl)-glycerol + ATP = 2-(9Z-octadecenoyl)-sn-glycero-3-phosphate + ADP + H(+). The enzyme catalyses 1,2-di-(9Z-octadecenoyl)-sn-glycerol + ATP = 1,2-di-(9Z-octadecenoyl)-sn-glycero-3-phosphate + ADP + H(+). It catalyses the reaction 1-octadecanoyl-2-(5Z,8Z,11Z,14Z-eicosatetraenoyl)-sn-glycerol + ATP = 1-octadecanoyl-2-(5Z,8Z,11Z,14Z-eicosatetraenoyl)-sn-glycero-3-phosphate + ADP + H(+). The catalysed reaction is 1,2-didecanoyl-sn-glycerol + ATP = 1,2-didecanoyl-sn-glycero-3-phosphate + ADP + H(+). It carries out the reaction 1-O-hexadecyl-2-acetyl-sn-glycerol + ATP = 1-O-hexadecyl-2-acetyl-sn-glycero-3-phosphate + ADP + H(+). The enzyme catalyses 1-O-hexadecyl-2-(5Z,8Z,11Z,14Z-eicosatetraenoyl)-sn-glycerol + ATP = 1-O-hexadecyl-2-(5Z,8Z,11Z,14Z-eicosatetraenoyl)-sn-glycero-3-phosphate + ADP + H(+). It catalyses the reaction 1-O-hexadecyl-2-(9Z-octadecenoyl)-sn-glycerol + ATP = 1-O-hexadecyl-2-(9Z-octadecenoyl)-sn-glycero-3-phosphate + ADP + H(+). The catalysed reaction is 1-O-hexadecyl-sn-glycerol + ATP = 1-O-hexadecyl-sn-glycero-3-phosphate + ADP + H(+). It participates in lipid metabolism; glycerolipid metabolism. Its activity is regulated as follows. Stimulated by calcium and phosphatidylserine. Diacylglycerol kinase that converts diacylglycerol/DAG into phosphatidic acid/phosphatidate/PA and regulates the respective levels of these two bioactive lipids. Thereby, acts as a central switch between the signaling pathways activated by these second messengers with different cellular targets and opposite effects in numerous biological processes. Also plays an important role in the biosynthesis of complex lipids. Can also phosphorylate 1-alkyl-2-acylglycerol in vitro as efficiently as diacylglycerol provided it contains an arachidonoyl group. Also involved in the production of alkyl-lysophosphatidic acid, another bioactive lipid, through the phosphorylation of 1-alkyl-2-acetyl glycerol. In Sus scrofa (Pig), this protein is Diacylglycerol kinase alpha (DGKA).